We begin with the raw amino-acid sequence, 317 residues long: Ribose-phosphate pyrophosphokinase (317 aa).

Residues 43–45 (DGE) and 102–103 (RQ) contribute to the ATP site. Positions 136 and 175 each coordinate Mg(2+). Residue Lys198 is part of the active site. D-ribose 5-phosphate contacts are provided by residues Arg200, Asp224, and 228–232 (DTAGT).

Belongs to the ribose-phosphate pyrophosphokinase family. Class I subfamily. As to quaternary structure, homohexamer. The cofactor is Mg(2+).

Its subcellular location is the cytoplasm. The enzyme catalyses D-ribose 5-phosphate + ATP = 5-phospho-alpha-D-ribose 1-diphosphate + AMP + H(+). The protein operates within metabolic intermediate biosynthesis; 5-phospho-alpha-D-ribose 1-diphosphate biosynthesis; 5-phospho-alpha-D-ribose 1-diphosphate from D-ribose 5-phosphate (route I): step 1/1. Functionally, involved in the biosynthesis of the central metabolite phospho-alpha-D-ribosyl-1-pyrophosphate (PRPP) via the transfer of pyrophosphoryl group from ATP to 1-hydroxyl of ribose-5-phosphate (Rib-5-P). In Oceanobacillus iheyensis (strain DSM 14371 / CIP 107618 / JCM 11309 / KCTC 3954 / HTE831), this protein is Ribose-phosphate pyrophosphokinase.